The sequence spans 457 residues: Multidrug resistance protein MdtK (457 aa).

12 helical membrane-spanning segments follow: residues 11–31, 53–73, 93–113, 127–147, 160–180, 188–208, 243–263, 280–300, 316–336, 357–377, 387–407, and 418–438; these read LLAL…MGVV, IWLP…PIIA, WLAI…KFLI, AVGF…YQVL, GMVI…IFIY, LGGV…FLLM, LPIA…ALLI, FSSL…IRVG, YTGI…SIIL, LMLF…GAGV, IFYI…YILG, and PQGF…MIFA.

Belongs to the multi antimicrobial extrusion (MATE) (TC 2.A.66.1) family. MdtK subfamily.

The protein localises to the cell inner membrane. Its function is as follows. Multidrug efflux pump that functions probably as a Na(+)/drug antiporter. This Photorhabdus laumondii subsp. laumondii (strain DSM 15139 / CIP 105565 / TT01) (Photorhabdus luminescens subsp. laumondii) protein is Multidrug resistance protein MdtK.